We begin with the raw amino-acid sequence, 122 residues long: Large ribosomal subunit protein uL14 (122 aa).

Belongs to the universal ribosomal protein uL14 family. Part of the 50S ribosomal subunit. Forms a cluster with proteins L3 and L19. In the 70S ribosome, L14 and L19 interact and together make contacts with the 16S rRNA in bridges B5 and B8.

In terms of biological role, binds to 23S rRNA. Forms part of two intersubunit bridges in the 70S ribosome. In Bradyrhizobium sp. (strain BTAi1 / ATCC BAA-1182), this protein is Large ribosomal subunit protein uL14.